A 193-amino-acid chain; its full sequence is Xanthine phosphoribosyltransferase (193 aa).

Positions 20 and 27 each coordinate xanthine. 128 to 132 contacts 5-phospho-alpha-D-ribose 1-diphosphate; the sequence is ANGQA. K156 lines the xanthine pocket.

The protein belongs to the purine/pyrimidine phosphoribosyltransferase family. Xpt subfamily. Homodimer.

Its subcellular location is the cytoplasm. It catalyses the reaction XMP + diphosphate = xanthine + 5-phospho-alpha-D-ribose 1-diphosphate. Its pathway is purine metabolism; XMP biosynthesis via salvage pathway; XMP from xanthine: step 1/1. Converts the preformed base xanthine, a product of nucleic acid breakdown, to xanthosine 5'-monophosphate (XMP), so it can be reused for RNA or DNA synthesis. The sequence is that of Xanthine phosphoribosyltransferase from Streptococcus equi subsp. equi (strain 4047).